We begin with the raw amino-acid sequence, 122 residues long: Small ribosomal subunit protein uS13c (122 aa).

The tract at residues Arg102–Lys122 is disordered.

The protein belongs to the universal ribosomal protein uS13 family. As to quaternary structure, part of the 30S ribosomal subunit.

The protein localises to the plastid. The protein resides in the chloroplast. In terms of biological role, located at the top of the head of the 30S subunit, it contacts several helices of the 16S rRNA. This chain is Small ribosomal subunit protein uS13c, found in Guillardia theta (Cryptophyte).